Consider the following 249-residue polypeptide: ATP synthase subunit a (249 aa).

6 consecutive transmembrane segments (helical) span residues serine 30 to glycine 50, phenylalanine 84 to isoleucine 104, leucine 114 to tyrosine 134, valine 143 to isoleucine 163, phenylalanine 193 to alanine 213, and isoleucine 220 to tyrosine 240.

This sequence belongs to the ATPase A chain family. F-type ATPases have 2 components, CF(1) - the catalytic core - and CF(0) - the membrane proton channel. CF(1) has five subunits: alpha(3), beta(3), gamma(1), delta(1), epsilon(1). CF(0) has three main subunits: a(1), b(2) and c(9-12). The alpha and beta chains form an alternating ring which encloses part of the gamma chain. CF(1) is attached to CF(0) by a central stalk formed by the gamma and epsilon chains, while a peripheral stalk is formed by the delta and b chains.

It localises to the cell inner membrane. Its function is as follows. Key component of the proton channel; it plays a direct role in the translocation of protons across the membrane. In Afipia carboxidovorans (strain ATCC 49405 / DSM 1227 / KCTC 32145 / OM5) (Oligotropha carboxidovorans), this protein is ATP synthase subunit a.